We begin with the raw amino-acid sequence, 338 residues long: Ketol-acid reductoisomerase (NADP(+)) (338 aa).

The region spanning 1-181 is the KARI N-terminal Rossmann domain; sequence MNVYYDRDCD…GGGRTGIIET (181 aa). NADP(+)-binding positions include 24–27, Arg-47, Ser-50, Ser-52, and 82–85; these read YGSQ and DEFQ. Residue His-107 is part of the active site. Gly-133 is a binding site for NADP(+). The KARI C-terminal knotted domain occupies 182–327; that stretch reads TFKDETETDL…GNLRAMMPWI (146 aa). Residues Asp-190, Glu-194, Glu-226, and Glu-230 each contribute to the Mg(2+) site. Ser-251 serves as a coordination point for substrate.

It belongs to the ketol-acid reductoisomerase family. The cofactor is Mg(2+).

The enzyme catalyses (2R)-2,3-dihydroxy-3-methylbutanoate + NADP(+) = (2S)-2-acetolactate + NADPH + H(+). The catalysed reaction is (2R,3R)-2,3-dihydroxy-3-methylpentanoate + NADP(+) = (S)-2-ethyl-2-hydroxy-3-oxobutanoate + NADPH + H(+). The protein operates within amino-acid biosynthesis; L-isoleucine biosynthesis; L-isoleucine from 2-oxobutanoate: step 2/4. It functions in the pathway amino-acid biosynthesis; L-valine biosynthesis; L-valine from pyruvate: step 2/4. Its function is as follows. Involved in the biosynthesis of branched-chain amino acids (BCAA). Catalyzes an alkyl-migration followed by a ketol-acid reduction of (S)-2-acetolactate (S2AL) to yield (R)-2,3-dihydroxy-isovalerate. In the isomerase reaction, S2AL is rearranged via a Mg-dependent methyl migration to produce 3-hydroxy-3-methyl-2-ketobutyrate (HMKB). In the reductase reaction, this 2-ketoacid undergoes a metal-dependent reduction by NADPH to yield (R)-2,3-dihydroxy-isovalerate. The polypeptide is Ketol-acid reductoisomerase (NADP(+)) (Trichlorobacter lovleyi (strain ATCC BAA-1151 / DSM 17278 / SZ) (Geobacter lovleyi)).